The sequence spans 379 residues: MKHLAVLGSTGSIGRQTLEIVRRYPSEFKIISMASYGNNLRLFFQQLEEFAPLAAAVYNEEVYNEACQRFPHMQFFLGQEGLTQLCIMDTVTTVVAASSGIEALPAILESMKKGKALALANKEILVCAGELVSKTAKENGIKVLPIDSEHNALYQCLEGRTIEGIKKLILTASGGPLLNKSLEELSCVTKQDVLNHPIWNMGSKVTVDSSTLVNKGLEIIEAYWLFGLENVEILAVIHPQSLIHGMVEFLDGSVISIMNPPDMLFPIQYALTAPERFASPRDGMDFSKKQTLEFFPVDEERFPSIRLAQQVLEKQGSSGSFFNAANEVLVRRFLCEEISWCDILRKLTTLMECHKVYACHSLEDILEVDGEARALAQEI.

NADPH-binding residues include Thr10, Gly11, Ser12, Ile13, Asn39, and Asn121. Position 122 (Lys122) interacts with 1-deoxy-D-xylulose 5-phosphate. An NADPH-binding site is contributed by Glu123. Position 147 (Asp147) interacts with Mn(2+). 1-deoxy-D-xylulose 5-phosphate-binding residues include Ser148, Glu149, Ser173, and His196. Glu149 contributes to the Mn(2+) binding site. Gly202 is a binding site for NADPH. 1-deoxy-D-xylulose 5-phosphate is bound by residues Ser209, Asn214, Lys215, and Glu218. Mn(2+) is bound at residue Glu218.

The protein belongs to the DXR family. Mg(2+) is required as a cofactor. Requires Mn(2+) as cofactor.

It catalyses the reaction 2-C-methyl-D-erythritol 4-phosphate + NADP(+) = 1-deoxy-D-xylulose 5-phosphate + NADPH + H(+). Its pathway is isoprenoid biosynthesis; isopentenyl diphosphate biosynthesis via DXP pathway; isopentenyl diphosphate from 1-deoxy-D-xylulose 5-phosphate: step 1/6. Functionally, catalyzes the NADPH-dependent rearrangement and reduction of 1-deoxy-D-xylulose-5-phosphate (DXP) to 2-C-methyl-D-erythritol 4-phosphate (MEP). The chain is 1-deoxy-D-xylulose 5-phosphate reductoisomerase from Chlamydia pneumoniae (Chlamydophila pneumoniae).